Here is a 275-residue protein sequence, read N- to C-terminus: Calcium uniporter protein, mitochondrial (275 aa).

The transit peptide at 1–28 directs the protein to the mitochondrion; sequence MNSFVIRNGFGLVRTFNTRLFTTSTQNL. Over 29 to 165 the chain is Mitochondrial matrix; that stretch reads EGELKTILGQ…DRKAHRRATA (137 aa). Positions 125–157 form a coiled coil; it reads VGLNKLIESKKSEINSLRQKIQPLEEKKQVIDR. The chain crosses the membrane as a helical span at residues 166-186; it reads IIWTGLGYCFAQAAILARLTW. Topologically, residues 187–192 are mitochondrial intermembrane; the sequence is WDLSWD. The Selectivity filter motif lies at 191-199; the sequence is WDIIEPVSY. The chain crosses the membrane as a helical span at residues 193–213; sequence IIEPVSYFLTFGSVLIGYTYF. Ca(2+) is bound at residue Glu-195. At 214 to 275 the chain is on the mitochondrial matrix side; it reads TMTKTEFTYE…ELATKYDHTH (62 aa). A coiled-coil region spans residues 244–270; sequence PKEDYENLVQAIDKKEKELKELELATK.

Belongs to the MCU (TC 1.A.77) family. As to quaternary structure, homooligomer.

The protein resides in the mitochondrion inner membrane. It carries out the reaction Ca(2+)(in) = Ca(2+)(out). Inhibited by ruthenium red or its derivative Ru360. Mitochondrial inner membrane calcium uniporter that mediates calcium uptake into mitochondria. Constitutes a pore-forming and calcium-conducting subunit. Mitochondrial calcium homeostasis plays key roles in cellular physiology and regulates cell bioenergetics, cytoplasmic calcium signals and activation of cell death pathways. Sufficient to operate as a pore-forming channel without the need of calcium-sensor or auxiliary subunit. This Dictyostelium discoideum (Social amoeba) protein is Calcium uniporter protein, mitochondrial.